A 126-amino-acid polypeptide reads, in one-letter code: Aspartate 1-decarboxylase (126 aa).

Residue Ser-25 is the Schiff-base intermediate with substrate; via pyruvic acid of the active site. Ser-25 carries the pyruvic acid (Ser) modification. Residue Thr-57 coordinates substrate. The active-site Proton donor is the Tyr-58. 73–75 (GAA) is a substrate binding site.

It belongs to the PanD family. Heterooctamer of four alpha and four beta subunits. Pyruvate serves as cofactor. In terms of processing, is synthesized initially as an inactive proenzyme, which is activated by self-cleavage at a specific serine bond to produce a beta-subunit with a hydroxyl group at its C-terminus and an alpha-subunit with a pyruvoyl group at its N-terminus.

The protein resides in the cytoplasm. The catalysed reaction is L-aspartate + H(+) = beta-alanine + CO2. It participates in cofactor biosynthesis; (R)-pantothenate biosynthesis; beta-alanine from L-aspartate: step 1/1. Functionally, catalyzes the pyruvoyl-dependent decarboxylation of aspartate to produce beta-alanine. This Pectobacterium carotovorum subsp. carotovorum (strain PC1) protein is Aspartate 1-decarboxylase.